We begin with the raw amino-acid sequence, 500 residues long: L-arabinose isomerase (500 aa).

4 residues coordinate Mn(2+): Glu306, Glu333, His350, and His450.

This sequence belongs to the arabinose isomerase family. Homohexamer. Mn(2+) is required as a cofactor.

The enzyme catalyses beta-L-arabinopyranose = L-ribulose. The protein operates within carbohydrate degradation; L-arabinose degradation via L-ribulose; D-xylulose 5-phosphate from L-arabinose (bacterial route): step 1/3. In terms of biological role, catalyzes the conversion of L-arabinose to L-ribulose. The sequence is that of L-arabinose isomerase from Klebsiella pneumoniae subsp. pneumoniae (strain ATCC 700721 / MGH 78578).